The chain runs to 642 residues: Threonine--tRNA ligase (642 aa).

The TGS domain occupies 1–61 (MPVITLPDGS…VDDASVAIIT (61 aa)). The segment at 243–534 (DHRKIGKQLD…LTEEYAGFFP (292 aa)) is catalytic. Residues Cys-334, His-385, and His-511 each coordinate Zn(2+).

This sequence belongs to the class-II aminoacyl-tRNA synthetase family. As to quaternary structure, homodimer. It depends on Zn(2+) as a cofactor.

It is found in the cytoplasm. It catalyses the reaction tRNA(Thr) + L-threonine + ATP = L-threonyl-tRNA(Thr) + AMP + diphosphate + H(+). Its function is as follows. Catalyzes the attachment of threonine to tRNA(Thr) in a two-step reaction: L-threonine is first activated by ATP to form Thr-AMP and then transferred to the acceptor end of tRNA(Thr). Also edits incorrectly charged L-seryl-tRNA(Thr). The chain is Threonine--tRNA ligase from Erwinia tasmaniensis (strain DSM 17950 / CFBP 7177 / CIP 109463 / NCPPB 4357 / Et1/99).